The sequence spans 78 residues: uncharacterized protein (78 aa).

The next 2 membrane-spanning stretches (helical) occupy residues 25-45 (IITA…DEVV) and 50-70 (KCAD…FVFV).

The protein resides in the membrane. This is an uncharacterized protein from Saccharomyces cerevisiae (strain ATCC 204508 / S288c) (Baker's yeast).